A 181-amino-acid chain; its full sequence is Ribulose bisphosphate carboxylase small subunit, chloroplastic 1 (181 aa).

A chloroplast-targeting transit peptide spans 1–57; sequence MASSIVSSAAVATRSNVAQASMVAPFTGLKSAASFPVTKKNNNVDITSLASNGGRVR.

It belongs to the RuBisCO small chain family. As to quaternary structure, heterohexadecamer of 8 large and 8 small subunits.

It is found in the plastid. The protein localises to the chloroplast. Functionally, ruBisCO catalyzes two reactions: the carboxylation of D-ribulose 1,5-bisphosphate, the primary event in carbon dioxide fixation, as well as the oxidative fragmentation of the pentose substrate. Both reactions occur simultaneously and in competition at the same active site. Although the small subunit is not catalytic it is essential for maximal activity. The protein is Ribulose bisphosphate carboxylase small subunit, chloroplastic 1 of Solanum tuberosum (Potato).